Reading from the N-terminus, the 344-residue chain is Aurora kinase B (344 aa).

T35 carries the phosphothreonine modification. The tract at residues 46–65 (NAQPTAAPGQKVVENSSGTP) is disordered. S62 is modified (phosphoserine). At T64 the chain carries Phosphothreonine. Residues 77-327 (FEIGRPLGKG…LAQVSAHPWV (251 aa)) enclose the Protein kinase domain. Residues 83-91 (LGKGKFGNV) and K106 each bind ATP. The Proton acceptor role is filled by D200. The residue at position 215 (K215) is an N6-acetyllysine. Position 227 is a phosphoserine (S227). Position 232 is a phosphothreonine; by autocatalysis (T232).

The protein belongs to the protein kinase superfamily. Ser/Thr protein kinase family. Aurora subfamily. In terms of assembly, component of the chromosomal passenger complex (CPC) composed of at least BIRC5/survivin, CDCA8/borealin, INCENP, AURKB or AURKC; predominantly independent AURKB- and AURKC-containing complexes exist. Associates with RACGAP1 during M phase. Interacts with SPDYC; this interaction may be required for proper localization of active, Thr-232-phosphorylated AURKB form during prometaphase and metaphase. Interacts with p53/TP53. Interacts (via the middle kinase domain) with NOC2L (via the N- and C-terminus domains). Interacts with CDCA1. Interacts with EVI5. Interacts with JTB. Interacts with NDC80. Interacts with PSMA3. Interacts with RNF2/RING1B. Interacts with SEPTIN1. Interacts with SIRT2. Interacts with TACC1. Interacts with TTC28. In terms of processing, the phosphorylation of Thr-232 requires the binding to INCENP and occurs by means of an autophosphorylation mechanism. Thr-232 phosphorylation is indispensable for the AURKB kinase activity. Acetylated at Lys-215 by KAT5 at kinetochores, increasing AURKB activity and promoting accurate chromosome segregation in mitosis. Post-translationally, ubiquitinated by different BCR (BTB-CUL3-RBX1) E3 ubiquitin ligase complexes. Ubiquitinated by the BCR(KLHL9-KLHL13) E3 ubiquitin ligase complex, ubiquitination leads to removal from mitotic chromosomes and is required for cytokinesis. During anaphase, the BCR(KLHL21) E3 ubiquitin ligase complex recruits the CPC complex from chromosomes to the spindle midzone and mediates the ubiquitination of AURKB. Ubiquitination of AURKB by BCR(KLHL21) E3 ubiquitin ligase complex may not lead to its degradation by the proteasome. Deubiquitinated by USP35; inhibiting CDH1-mediated degradation of AURKB.

The protein localises to the nucleus. The protein resides in the chromosome. Its subcellular location is the centromere. It is found in the kinetochore. It localises to the cytoplasm. The protein localises to the cytoskeleton. The protein resides in the spindle. Its subcellular location is the midbody. The enzyme catalyses L-seryl-[protein] + ATP = O-phospho-L-seryl-[protein] + ADP + H(+). It catalyses the reaction L-threonyl-[protein] + ATP = O-phospho-L-threonyl-[protein] + ADP + H(+). Activity is greatly increased when AURKB is within the CPC complex. In particular, AURKB-phosphorylated INCENP acts as an activator of AURKB. Positive feedback between HASPIN and AURKB contributes to CPC localization. In terms of biological role, serine/threonine-protein kinase component of the chromosomal passenger complex (CPC), a complex that acts as a key regulator of mitosis. The CPC complex has essential functions at the centromere in ensuring correct chromosome alignment and segregation and is required for chromatin-induced microtubule stabilization and spindle assembly. Involved in the bipolar attachment of spindle microtubules to kinetochores and is a key regulator for the onset of cytokinesis during mitosis. Required for central/midzone spindle assembly and cleavage furrow formation. Key component of the cytokinesis checkpoint, a process required to delay abscission to prevent both premature resolution of intercellular chromosome bridges and accumulation of DNA damage: phosphorylates CHMP4C, leading to retain abscission-competent VPS4 (VPS4A and/or VPS4B) at the midbody ring until abscission checkpoint signaling is terminated at late cytokinesis. AURKB phosphorylates the CPC complex subunits BIRC5/survivin, CDCA8/borealin and INCENP. Phosphorylation of INCENP leads to increased AURKB activity. Other known AURKB substrates involved in centromeric functions and mitosis are CENPA, DES/desmin, GPAF, KIF2C, NSUN2, RACGAP1, SEPTIN1, VIM/vimentin, HASPIN, and histone H3. A positive feedback loop involving HASPIN and AURKB contributes to localization of CPC to centromeres. Phosphorylation of VIM controls vimentin filament segregation in cytokinetic process, whereas histone H3 is phosphorylated at 'Ser-10' and 'Ser-28' during mitosis (H3S10ph and H3S28ph, respectively). AURKB is also required for kinetochore localization of BUB1 and SGO1. Phosphorylation of p53/TP53 negatively regulates its transcriptional activity. Key regulator of active promoters in resting B- and T-lymphocytes: acts by mediating phosphorylation of H3S28ph at active promoters in resting B-cells, inhibiting RNF2/RING1B-mediated ubiquitination of histone H2A and enhancing binding and activity of the USP16 deubiquitinase at transcribed genes. Acts as an inhibitor of CGAS during mitosis: catalyzes phosphorylation of the N-terminus of CGAS during the G2-M transition, blocking CGAS liquid phase separation and activation, and thereby preventing CGAS-induced autoimmunity. Phosphorylates KRT5 during anaphase and telophase. Phosphorylates ATXN10 which promotes phosphorylation of ATXN10 by PLK1 and may play a role in the regulation of cytokinesis and stimulating the proteasomal degradation of ATXN10. The chain is Aurora kinase B (AURKB) from Bos taurus (Bovine).